Here is a 431-residue protein sequence, read N- to C-terminus: Protein farnesyltransferase subunit beta (431 aa).

5 PFTB repeats span residues 130–171 (KRKI…SLCD), 182–224 (RKGI…TLLN), 231–273 (TEGV…AILR), 280–322 (VEKL…AILE), and 332–375 (KHAL…AVAE). Residues 258 to 261 (HGGY) and 301 to 304 (RSNK) contribute to the (2E,6E)-farnesyl diphosphate site. Asp-307 and Cys-309 together coordinate Zn(2+). 310 to 313 (YSFW) contacts (2E,6E)-farnesyl diphosphate. Residue His-363 coordinates Zn(2+).

Belongs to the protein prenyltransferase subunit beta family. As to quaternary structure, heterodimer of an alpha (RAM2) and a beta (RAM1) subunit. The cofactor is Zn(2+).

The protein resides in the cytoplasm. It catalyses the reaction L-cysteinyl-[protein] + (2E,6E)-farnesyl diphosphate = S-(2E,6E)-farnesyl-L-cysteinyl-[protein] + diphosphate. In terms of biological role, catalyzes the transfer of a farnesyl moiety from farnesyl diphosphate to a cysteine at the fourth position from the C-terminus of several proteins having the C-terminal sequence Cys-aliphatic-aliphatic-X where X is Ser, Ala, Met, Cys, or Gln. Required for the membrane localization of proteins such as a-factor, Ras proteins and other membrane proteins containing the C-terminal CAAX motif. The beta subunit is responsible for isoprenoid and peptide-binding. The sequence is that of Protein farnesyltransferase subunit beta from Saccharomyces cerevisiae (strain ATCC 204508 / S288c) (Baker's yeast).